The primary structure comprises 119 residues: MAWTPLLFLTLLLHCTGSLSQLVLTQSPSASASLGASVKLTCTLSSGHSSYAIAWHQQQPEKGPRYLMKLNSDGSHSKGDGIPDRFSGSSSGAERYLTISSLQSEDEADYYCQTWGTGI.

An N-terminal signal peptide occupies residues 1 to 20; that stretch reads MAWTPLLFLTLLLHCTGSLS. The framework-1 stretch occupies residues 21–45; that stretch reads QLVLTQSPSASASLGASVKLTCTLS. The region spanning 21 to 119 is the Ig-like domain; it reads QLVLTQSPSA…YYCQTWGTGI (99 aa). Cysteines 42 and 112 form a disulfide. The complementarity-determining-1 stretch occupies residues 46–52; the sequence is SGHSSYA. Residues 53-69 are framework-2; it reads IAWHQQQPEKGPRYLMK. The complementarity-determining-2 stretch occupies residues 70–76; it reads LNSDGSH. The tract at residues 73 to 92 is disordered; sequence DGSHSKGDGIPDRFSGSSSG. Positions 77–112 are framework-3; the sequence is SKGDGIPDRFSGSSSGAERYLTISSLQSEDEADYYC. The tract at residues 113 to 119 is complementarity-determining-3; the sequence is QTWGTGI.

In terms of assembly, immunoglobulins are composed of two identical heavy chains and two identical light chains; disulfide-linked.

The protein resides in the secreted. It is found in the cell membrane. In terms of biological role, v region of the variable domain of immunoglobulin light chains that participates in the antigen recognition. Immunoglobulins, also known as antibodies, are membrane-bound or secreted glycoproteins produced by B lymphocytes. In the recognition phase of humoral immunity, the membrane-bound immunoglobulins serve as receptors which, upon binding of a specific antigen, trigger the clonal expansion and differentiation of B lymphocytes into immunoglobulins-secreting plasma cells. Secreted immunoglobulins mediate the effector phase of humoral immunity, which results in the elimination of bound antigens. The antigen binding site is formed by the variable domain of one heavy chain, together with that of its associated light chain. Thus, each immunoglobulin has two antigen binding sites with remarkable affinity for a particular antigen. The variable domains are assembled by a process called V-(D)-J rearrangement and can then be subjected to somatic hypermutations which, after exposure to antigen and selection, allow affinity maturation for a particular antigen. The sequence is that of Immunoglobulin lambda variable 4-69 from Homo sapiens (Human).